Reading from the N-terminus, the 377-residue chain is Trichodiene synthase (377 aa).

It belongs to the trichodiene synthase family.

It catalyses the reaction (2E,6E)-farnesyl diphosphate = trichodiene + diphosphate. Its pathway is sesquiterpene biosynthesis; trichothecene biosynthesis. In terms of biological role, TS is a member of the terpene cyclase group of enzymes. It catalyzes the isomerization and cyclization of farnesyl pyro-phosphate to form trichodiene, the first cyclic intermediate in the biosynthetic pathway for trichothecenes. It serves to branch trichothecene biosynthesis from the isoprenoid pathway. This is Trichodiene synthase (TRI5) from Fusarium poae.